The sequence spans 43 residues: Photosystem II reaction center protein Psb30 (43 aa).

Residues 16 to 36 (IAQLTMLAMVLIAGPVVIVLL) form a helical membrane-spanning segment.

Belongs to the Psb30/Ycf12 family. PSII is composed of 1 copy each of membrane proteins PsbA, PsbB, PsbC, PsbD, PsbE, PsbF, PsbH, PsbI, PsbJ, PsbK, PsbL, PsbM, PsbT, PsbX, PsbY, PsbZ, Psb30/Ycf12, peripheral proteins PsbO, CyanoQ (PsbQ), PsbU, PsbV and a large number of cofactors. It forms dimeric complexes.

The protein localises to the cellular thylakoid membrane. A core subunit of photosystem II (PSII), probably helps stabilize the reaction center. The protein is Photosystem II reaction center protein Psb30 of Trichodesmium erythraeum (strain IMS101).